The following is a 118-amino-acid chain: Small ribosomal subunit protein uS13 (118 aa).

The tract at residues R93–K118 is disordered.

It belongs to the universal ribosomal protein uS13 family. As to quaternary structure, part of the 30S ribosomal subunit. Forms a loose heterodimer with protein S19. Forms two bridges to the 50S subunit in the 70S ribosome.

Functionally, located at the top of the head of the 30S subunit, it contacts several helices of the 16S rRNA. In the 70S ribosome it contacts the 23S rRNA (bridge B1a) and protein L5 of the 50S subunit (bridge B1b), connecting the 2 subunits; these bridges are implicated in subunit movement. Contacts the tRNAs in the A and P-sites. This chain is Small ribosomal subunit protein uS13, found in Pseudomonas syringae pv. tomato (strain ATCC BAA-871 / DC3000).